A 589-amino-acid chain; its full sequence is ATP-dependent lipid A-core flippase (589 aa).

The next 5 membrane-spanning stretches (helical) occupy residues 29-49 (WLLVVAACGALLEAVAGSTFL), 68-88 (ALWLPLGIVGLFLLRGIAGYI), 157-177 (VIGALVVMLWYSWTVTLAILL), 254-274 (LSSAAVQLLGAVGLAMLLLIA), and 283-303 (LSPGDFVSLMTSMIAVIPALK). In terms of domain architecture, ABC transmembrane type-1 spans 32–314 (VVAACGALLE…LTNVQNMLQS (283 aa)). Residues 346–582 (IEFRGITARY…DGLYAYLYSM (237 aa)) form the ABC transporter domain. 380-387 (GRSGSGKS) lines the ATP pocket.

Belongs to the ABC transporter superfamily. Lipid exporter (TC 3.A.1.106) family. In terms of assembly, homodimer.

The protein localises to the cell inner membrane. The enzyme catalyses ATP + H2O + lipid A-core oligosaccharideSide 1 = ADP + phosphate + lipid A-core oligosaccharideSide 2.. Its function is as follows. Involved in lipopolysaccharide (LPS) biosynthesis. Translocates lipid A-core from the inner to the outer leaflet of the inner membrane. Transmembrane domains (TMD) form a pore in the inner membrane and the ATP-binding domain (NBD) is responsible for energy generation. This Xylella fastidiosa (strain 9a5c) protein is ATP-dependent lipid A-core flippase.